A 285-amino-acid polypeptide reads, in one-letter code: Bifunctional protein FolD (285 aa).

NADP(+) contacts are provided by residues 166–168 and isoleucine 232; that span reads GAS.

The protein belongs to the tetrahydrofolate dehydrogenase/cyclohydrolase family. As to quaternary structure, homodimer.

The catalysed reaction is (6R)-5,10-methylene-5,6,7,8-tetrahydrofolate + NADP(+) = (6R)-5,10-methenyltetrahydrofolate + NADPH. The enzyme catalyses (6R)-5,10-methenyltetrahydrofolate + H2O = (6R)-10-formyltetrahydrofolate + H(+). The protein operates within one-carbon metabolism; tetrahydrofolate interconversion. Its function is as follows. Catalyzes the oxidation of 5,10-methylenetetrahydrofolate to 5,10-methenyltetrahydrofolate and then the hydrolysis of 5,10-methenyltetrahydrofolate to 10-formyltetrahydrofolate. The chain is Bifunctional protein FolD from Psychromonas ingrahamii (strain DSM 17664 / CCUG 51855 / 37).